The primary structure comprises 189 residues: UPF0301 protein RT0098 (189 aa).

Belongs to the UPF0301 (AlgH) family.

The chain is UPF0301 protein RT0098 from Rickettsia typhi (strain ATCC VR-144 / Wilmington).